We begin with the raw amino-acid sequence, 234 residues long: dTDP-4-amino-4,6-dideoxyglucose formyltransferase (234 aa).

DTDP-4-amino-4,6-dideoxy-alpha-D-glucose contacts are provided by residues N9 and H62 to K64. Position 65–67 (Q65–F67) interacts with (6R)-10-formyltetrahydrofolate. H81 acts as the Proton acceptor in catalysis. G90–Q94 provides a ligand contact to dTDP-4-amino-4,6-dideoxy-alpha-D-glucose. Positions 112, 116, and 175 each coordinate (6R)-10-formyltetrahydrofolate. A dTDP-4-amino-4,6-dideoxy-alpha-D-glucose-binding site is contributed by N209.

The protein belongs to the dTDP-Qui4N formyltransferase family. Homodimer.

It catalyses the reaction dTDP-4-amino-4,6-dideoxy-alpha-D-glucose + (6R)-10-formyltetrahydrofolate = dTDP-4-formamido-4,6-dideoxy-alpha-D-glucose + (6S)-5,6,7,8-tetrahydrofolate + H(+). Sugar N-formyltransferase that catalyzes the conversion of dTDP-4-amino-4,6-dideoxyglucose into dTDP-4-formamido-4,6-dideoxyglucose using N(10)-formyltetrahydrofolate as the carbon source. Plays a role in virulence. The protein is dTDP-4-amino-4,6-dideoxyglucose formyltransferase of Mycobacterium bovis (strain ATCC BAA-935 / AF2122/97).